We begin with the raw amino-acid sequence, 461 residues long: MTSRGRARASDRRARGAVVASGKIDFTDAGCFELPYAPVAEALLPEGPWKVVEGGVCAAKGFKVAGYKAGLRAKGTRADCALIVADEDATCAGIFTTNIMCAAPVTYCKKQLAGKPTARALLINAAQANAATGDQGAADAQATAEELSKSLGVAEEDILLMSTGVIGKRIKLDKLMPAIPILSANVESSTAAANAAATAICTTDLVRKTVAIEVQIGGKTVCMGGMAKGSGMIHPNMATMLGVVTCDADVTPEVWRNITSRAGAASFNQISVDGDTSTNDSLVCFASGKAGNAKITSVDSAEGKLLEQALTAVCRGLAKAIAWDGEGATCLIECNVSGAADDEDARVIARSVVCSSLAKAAIFGHDPNWGRLACAAGYAAPVKNRFDQNDLKLSLGPHQLMDKGQPLDFDAVAASRYLKEVTGVHGTCVVDISVGNGSGRGQAWGCDLSYDYVKINAEYTT.

The substrate site is built by T202, K228, T239, E326, N456, and T461. The active-site Nucleophile is the T239.

It belongs to the ArgJ family. Heterodimer of an alpha and a beta chain.

It is found in the plastid. The protein resides in the chloroplast. It catalyses the reaction N(2)-acetyl-L-ornithine + L-glutamate = N-acetyl-L-glutamate + L-ornithine. It carries out the reaction L-glutamate + acetyl-CoA = N-acetyl-L-glutamate + CoA + H(+). Its pathway is amino-acid biosynthesis; L-arginine biosynthesis; L-ornithine and N-acetyl-L-glutamate from L-glutamate and N(2)-acetyl-L-ornithine (cyclic): step 1/1. It participates in amino-acid biosynthesis; L-arginine biosynthesis; N(2)-acetyl-L-ornithine from L-glutamate: step 1/4. In terms of biological role, catalyzes two activities which are involved in the cyclic version of arginine biosynthesis: the synthesis of acetylglutamate from glutamate and acetyl-CoA, and of ornithine by transacetylation between acetylornithine and glutamate. This is Arginine biosynthesis bifunctional protein ArgJ, chloroplastic from Ostreococcus lucimarinus (strain CCE9901).